The sequence spans 241 residues: Superantigen-like protein 13 (241 aa).

The signal sequence occupies residues 1-26; that stretch reads MNNNITKKIILSTTLLLLGTASTQFP.

This sequence belongs to the staphylococcal/streptococcal toxin family. Interacts with host FPR2; this interaction promotes neutrophil chemotaxis.

Its function is as follows. Acts as a pathogen alarming molecule by acting on host neutrophil chemotactic factors FPR2. Plays a role of chemoattractant and induces degranulation and oxidative burst in neutrophils. This is Superantigen-like protein 13 from Staphylococcus aureus (strain Newman).